The sequence spans 170 residues: Photosystem I assembly protein Ycf3 (170 aa).

3 TPR repeats span residues 35-69, 73-106, and 121-154; these read AFTY…EIDP, SYIL…NPSL, and GEQA…APGN.

It belongs to the Ycf3 family.

Its subcellular location is the plastid. It localises to the chloroplast thylakoid membrane. Essential for the assembly of the photosystem I (PSI) complex. May act as a chaperone-like factor to guide the assembly of the PSI subunits. The chain is Photosystem I assembly protein Ycf3 from Cycas taitungensis (Prince sago).